The sequence spans 863 residues: Oleate activated transcription factor 3 (863 aa).

Positions 19-47 (CTNCKKRKSKCDRTKPCGTCVRLGDVDSC) form a DNA-binding region, zn(2)-C6 fungal-type. Residues 52-63 (DSSGQPESSPSL) are compositionally biased toward polar residues. The interval 52–81 (DSSGQPESSPSLNDADPLRKQSTPAERISP) is disordered.

It belongs to the OAF3 family.

Its subcellular location is the cytoplasm. It localises to the nucleus. It is found in the mitochondrion. Transcriptional inhibitor with a significantly increased number of target genes in response to oleate. The polypeptide is Oleate activated transcription factor 3 (OAF3) (Saccharomyces cerevisiae (strain RM11-1a) (Baker's yeast)).